Here is a 453-residue protein sequence, read N- to C-terminus: Cytochrome b-c1 complex subunit 2, mitochondrial (453 aa).

Residues methionine 1 to tyrosine 14 constitute a mitochondrion transit peptide. An N6-acetyllysine mark is found at lysine 66, lysine 199, and lysine 250.

This sequence belongs to the peptidase M16 family. UQCRC2/QCR2 subfamily. Component of the ubiquinol-cytochrome c oxidoreductase (cytochrome b-c1 complex, complex III, CIII), a multisubunit enzyme composed of 11 subunits. The complex is composed of 3 respiratory subunits cytochrome b, cytochrome c1 and Rieske protein UQCRFS1, 2 core protein subunits UQCRC1/QCR1 and UQCRC2/QCR2, and 6 low-molecular weight protein subunits UQCRH/QCR6, UQCRB/QCR7, UQCRQ/QCR8, UQCR10/QCR9, UQCR11/QCR10 and subunit 9, the cleavage product of Rieske protein UQCRFS1. The complex exists as an obligatory dimer and forms supercomplexes (SCs) in the inner mitochondrial membrane with NADH-ubiquinone oxidoreductase (complex I, CI) and cytochrome c oxidase (complex IV, CIV), resulting in different assemblies (supercomplex SCI(1)III(2)IV(1) and megacomplex MCI(2)III(2)IV(2)). Interacts with RAB5IF. Interacts with STMP1.

The protein localises to the mitochondrion inner membrane. Component of the ubiquinol-cytochrome c oxidoreductase, a multisubunit transmembrane complex that is part of the mitochondrial electron transport chain which drives oxidative phosphorylation. The respiratory chain contains 3 multisubunit complexes succinate dehydrogenase (complex II, CII), ubiquinol-cytochrome c oxidoreductase (cytochrome b-c1 complex, complex III, CIII) and cytochrome c oxidase (complex IV, CIV), that cooperate to transfer electrons derived from NADH and succinate to molecular oxygen, creating an electrochemical gradient over the inner membrane that drives transmembrane transport and the ATP synthase. The cytochrome b-c1 complex catalyzes electron transfer from ubiquinol to cytochrome c, linking this redox reaction to translocation of protons across the mitochondrial inner membrane, with protons being carried across the membrane as hydrogens on the quinol. In the process called Q cycle, 2 protons are consumed from the matrix, 4 protons are released into the intermembrane space and 2 electrons are passed to cytochrome c. The 2 core subunits UQCRC1/QCR1 and UQCRC2/QCR2 are homologous to the 2 mitochondrial-processing peptidase (MPP) subunits beta-MPP and alpha-MPP respectively, and they seem to have preserved their MPP processing properties. May be involved in the in situ processing of UQCRFS1 into the mature Rieske protein and its mitochondrial targeting sequence (MTS)/subunit 9 when incorporated into complex III. The chain is Cytochrome b-c1 complex subunit 2, mitochondrial (UQCRC2) from Homo sapiens (Human).